We begin with the raw amino-acid sequence, 648 residues long: RAF proto-oncogene serine/threonine-protein kinase (648 aa).

Position 29 is a phosphoserine; by MAPK1 (Ser-29). At Ser-43 the chain carries Phosphoserine; by PKA and MAPK1. The RBD domain occupies 56–131; it reads NTIRVFLPNK…IGEELQVDFL (76 aa). A Phorbol-ester/DAG-type zinc finger spans residues 138–184; sequence THNFARKTFLKLAFCDICQKFLLNGFRCQTCGYKFHEHCSTKVPTMC. The Zn(2+) site is built by His-139, Cys-152, Cys-155, Cys-165, Cys-168, His-173, Cys-176, and Cys-184. The tract at residues 205–265 is disordered; it reads GVPAPPSFPM…RSTSTPNVHM (61 aa). Ser-233 is modified (phosphoserine; by PKA). The span at 239 to 265 shows a compositional bias: polar residues; it reads TFNTSSPSSEGSLSQRQRSTSTPNVHM. Ser-252 is modified (phosphoserine). A Phosphoserine; by PKA, PKC and PKB/AKT1 modification is found at Ser-259. The residue at position 268 (Thr-268) is a Phosphothreonine; by autocatalysis. Thr-269 is modified (phosphothreonine; by PKA). Residues 281–335 form a disordered region; sequence IRSHSESASPSALSSSPNNLSPTGWSQPKTPVPAQRERAPGSGTQEKNKIRPRGQ. Residues 286 to 301 show a composition bias toward low complexity; sequence ESASPSALSSSPNNLS. Phosphoserine; by MAPK1 occurs at positions 289, 296, and 301. Residues 331–349 are interaction with PEBP1/RKIP; it reads RPRGQRDSSYYWEIEASEV. Ser-338 bears the Phosphoserine; by PAK1, PAK2, PAK3 and PAK5 mark. The residue at position 339 (Ser-339) is a Phosphoserine; by PAK1, PAK2 and PAK3. Phosphotyrosine; by SRC occurs at positions 340 and 341. Residues 349–609 form the Protein kinase domain; it reads VMLSTRIGSG…PQILSSIELL (261 aa). Residues 355-363 and Lys-375 each bind ATP; that span reads IGSGSFGTV. Asp-468 serves as the catalytic Proton acceptor. Phosphoserine is present on Ser-471. Phosphothreonine is present on Thr-491. Ser-494 is modified (phosphoserine). A phosphoserine; by PKC mark is found at Ser-497 and Ser-499. Arg-563 carries the symmetric dimethylarginine; by PRMT5 modification. At Ser-621 the chain carries Phosphoserine. A Phosphoserine; by MAPK1 modification is found at Ser-642.

Belongs to the protein kinase superfamily. TKL Ser/Thr protein kinase family. RAF subfamily. As to quaternary structure, monomer. Homodimer. Heterodimerizes with BRAF and this heterodimer possesses a highly increased kinase activity compared to the respective homodimers or monomers. Heterodimerization is mitogen-regulated and enhanced by 14-3-3 proteins. MAPK1/ERK2 activation can induce a negative feedback that promotes the dissociation of the heterodimer. Forms a multiprotein complex with Ras (M-Ras/MRAS), SHOC2 and protein phosphatase 1 (PPP1CA, PPP1CB and PPP1CC). Interacts with LZTR1. Interacts with Ras proteins; the interaction is antagonized by RIN1. Weakly interacts with RIT1. Interacts (via N-terminus) with RGS14 (via RBD domains); the interaction mediates the formation of a ternary complex with BRAF, a ternary complex inhibited by GNAI1. Probably forms a complex composed of chaperones HSP90 and HSP70, co-chaperones CDC37, PPP5C, TSC1 and client protein TSC2, CDK4, AKT, RAF1 and NR3C1; this complex does not contain co-chaperones STIP1/HOP and PTGES3/p23. Interacts with STK3/MST2; the interaction inhibits its pro-apoptotic activity. Interacts (when phosphorylated at Ser-259) with YWHAZ (unphosphorylated at 'Thr-232'). Interacts with MAP2K1/MEK1 and MAP2K2/MEK2. Interacts with MAP3K5/ASF1 (via N-terminus) and this interaction inhibits the proapoptotic function of MAP3K5/ASK1. Interacts with PAK1 (via kinase domain). The Ser-338 and Ser-339 phosphorylated form (by PAK1) interacts with BCL2. Interacts with PEBP1/RKIP and this interaction is enhanced if RAF1 is phosphorylated on residues Ser-338, Ser-339, Tyr-340 and Tyr-341. Interacts with ADCY2, ADCY5, ADCY6, DGKH, RCAN1/DSCR1, PPP1R12A, PKB/AKT1, SPRY2, SPRY4, CNKSR1/CNK1, KSR2 and PHB/prohibitin. The phosphorylated form interacts with PIN1. Interacts with PPP2CA, PPP2R1B and ROCK2. In its active form, interacts with PRMT5. Interacts with FAM83B; displaces 14-3-3 proteins from RAF1 and activates RAF1. Interacts with PDE8A; the interaction promotes RAF1 activity. Interacts with MFHAS1. Interacts with GLS. Interacts with NEK10 and MAP2K1; the interaction is direct with NEK10 and required for ERK1/2-signaling pathway activation in response to UV irradiation. Zn(2+) is required as a cofactor. Phosphorylation at Thr-269, Ser-338, Tyr-341, Thr-491 and Ser-494 results in its activation. Phosphorylation at Ser-29, Ser-43, Ser-289, Ser-296, Ser-301 and Ser-642 by MAPK1/ERK2 results in its inactivation. Phosphorylation at Ser-259 induces the interaction with YWHAZ and inactivates kinase activity. Dephosphorylation of Ser-259 by the SHOC2-MRAS-PP1c (SMP) complex consisting of SHOC2, GTP-bound M-Ras/MRAS and the catalytic subunit of protein phosphatase 1 (PPP1CA, PPP1CB or PPP1CC); this relieves inactivation and stimulates kinase activity. Phosphorylation at Ser-338 by PAK1 and PAK5 and Ser-339 by PAK1 is required for its mitochondrial localization. Phosphorylation at Ser-621 in response to growth factor treatment stabilizes the protein, possibly by preventing proteasomal degradation. Phosphorylation at Ser-289, Ser-296, Ser-301, Ser-338 and Ser-621 are somehow linked to the methylation potential of cells. Treatment of cells with HGF in the presence of the methylation inhibitor 5'-methylthioadenosine (MTA) results in increased phosphorylation at Ser-338 and Ser-621 and decreased phosphorylation at Ser-296, Ser-301 and Ser-338. Dephosphorylation at Ser-338 by PPP5C results in a decreased of activity. Post-translationally, methylated at Arg-563 in response to EGF treatment. This modification leads to destabilization of the protein, possibly through proteasomal degradation. As to expression, present in all tissues tested: testis, ovary, small intestine, colon, peripheral blood leukocytes, fetal liver, bone marrow, thymus, lymph node and spleen, and the cell lines melanoma G-361, lung carcinoma A-549, colorectal adenocarcinoma SW480, Burkitt's lymphoma Raji and lymphoblastic leukemia MOLT-4. In skeletal muscle, isoform 1 is more abundant than isoform 2.

It is found in the cytoplasm. Its subcellular location is the cell membrane. It localises to the mitochondrion. The protein resides in the nucleus. It carries out the reaction L-seryl-[protein] + ATP = O-phospho-L-seryl-[protein] + ADP + H(+). It catalyses the reaction L-threonyl-[protein] + ATP = O-phospho-L-threonyl-[protein] + ADP + H(+). Regulation is a highly complex process involving membrane recruitment, protein-protein interactions, dimerization, and phosphorylation/dephosphorylation events. Ras-GTP recruits RAF1 to the membrane, thereby promoting its activation. The inactive conformation of RAF1 is maintained by autoinhibitory interactions occurring between the N-terminal regulatory and the C-terminal catalytic domains and by the binding of a 14-3-3 protein that contacts two phosphorylation sites, Ser-259 and Ser-621. Upon mitogenic stimulation, Ras and PPP2R1A cooperate to release autoinhibition and the subsequent phosphorylation of activating sites: Ser-338, Tyr-341, Thr-491, and Ser-494, yields a fully active kinase. Through a negative feedback mechanism involving MAPK1/ERK2, RAF1 is phosphorylated on Ser-29, Ser-43, Ser-289, Ser-296, Ser-301 and Ser-642 by MAPK1/ERK2, which yields an inactive, desensitized kinase. The signaling-competent conformation of RAF1 is finally re-established by the coordinated action of PIN1, a prolyl isomerase that converts pSer and pThr residues from the cis to the trans conformation, which is preferentially recognized and dephosphorylated by PPP2R1A. Activated by homodimerization and heterodimerization (with BRAF). Also regulated through association with other proteins such as KSR2, CNKSR1/CNK1, PEBP1/RKIP, PHB/prohibitin and SPRY4. PEBP1/RKIP acts by dissociating RAF1 from its substrates MAP2K1/MEK1 and MAP2K2/MEK2. PHB/prohibitin facilitates the displacement of 14-3-3 from RAF1 by activated Ras, thereby promoting cell membrane localization and phosphorylation of RAF1 at the activating Ser-338. SPRY4 inhibits Ras-independent, but not Ras-dependent, activation of RAF1. CNKSR1/CNK1 regulates Src-mediated RAF1 activation. In terms of biological role, serine/threonine-protein kinase that acts as a regulatory link between the membrane-associated Ras GTPases and the MAPK/ERK cascade, and this critical regulatory link functions as a switch determining cell fate decisions including proliferation, differentiation, apoptosis, survival and oncogenic transformation. RAF1 activation initiates a mitogen-activated protein kinase (MAPK) cascade that comprises a sequential phosphorylation of the dual-specific MAPK kinases (MAP2K1/MEK1 and MAP2K2/MEK2) and the extracellular signal-regulated kinases (MAPK3/ERK1 and MAPK1/ERK2). The phosphorylated form of RAF1 (on residues Ser-338 and Ser-339, by PAK1) phosphorylates BAD/Bcl2-antagonist of cell death at 'Ser-75'. Phosphorylates adenylyl cyclases: ADCY2, ADCY5 and ADCY6, resulting in their activation. Phosphorylates PPP1R12A resulting in inhibition of the phosphatase activity. Phosphorylates TNNT2/cardiac muscle troponin T. Can promote NF-kB activation and inhibit signal transducers involved in motility (ROCK2), apoptosis (MAP3K5/ASK1 and STK3/MST2), proliferation and angiogenesis (RB1). Can protect cells from apoptosis also by translocating to the mitochondria where it binds BCL2 and displaces BAD/Bcl2-antagonist of cell death. Plays a role in the oncogenic transformation of epithelial cells via repression of the TJ protein, occludin (OCLN) by inducing the up-regulation of a transcriptional repressor SNAI2/SLUG, which induces down-regulation of OCLN. Restricts caspase activation in response to selected stimuli, notably Fas stimulation, pathogen-mediated macrophage apoptosis, and erythroid differentiation. Regulates Rho signaling and migration, and is required for normal wound healing. This Mus musculus (Mouse) protein is RAF proto-oncogene serine/threonine-protein kinase (Raf1).